A 654-amino-acid chain; its full sequence is MKRSTANAPKLSPKHESESDPKKVKLEEEAKPTVNQAPTGREIVENYLKGDVTAAVLYRKICNALETFEQWESEAPKIQLLDQFLNIADAMEARTETLVKRLLSLRWDKIPGSVIERFRNFLCELAIRHLCFTEEVYSAVVERLVPQISVTEETGVVTLILTEKVQNEHFEMAHHIISSVLRCFPLSARALLKCVKRVMPHFTRPSVTVAGYMRNLILMQKYIPASISKDVWEAVFERLAKDDTHNWKCEQNEEMSKSPRLFALNDDILIEEVVEGNTNDSEDVTPEQLEQRKGEQMIQYLDSVCTDVITFIRSSVDSEIDEENGNERTKLNDKWLRNFKITGDKVLPKEKLFDTFLECLESTMLNATHVQYVSFIWLYFCSLSQEYEKKMLEHLWQVTIRMPRAPADARKSQGAASYLAAFLARAKYVKKSTAFTWLEEVYIWLRHYVDQFGSGSSQILPGLQRHGTFYSVSQAFFLVFAFRYKEFVKNKDMLETIRRWGVGRVVHSPLEPLKYVSKPVARCFSAITRSLQLVYCNHIIPIEEVQRPFDDMFPFDCYHLKESSKFMTPLMRKFSPLAEDMSTLTKALCWNAATADKSEKSAEAVSSSEGLDFLDEDDAMMMGGSSGYRERTFSCGQSSLINYSATPGLQTFNV.

The tract at residues 1 to 37 (MKRSTANAPKLSPKHESESDPKKVKLEEEAKPTVNQA) is disordered. Residues 13–31 (PKHESESDPKKVKLEEEAK) are compositionally biased toward basic and acidic residues.

This sequence belongs to the RRN3 family.

It is found in the nucleus. The protein localises to the nucleolus. Functionally, required for efficient transcription initiation by RNA polymerase I (Pol I). The chain is RNA polymerase I-specific transcription initiation factor tif-1A from Caenorhabditis elegans.